We begin with the raw amino-acid sequence, 97 residues long: RNA-binding protein Hfq (97 aa).

Residues 10–70 (DPFLNALRKE…ISTIVPARSV (61 aa)) form the Sm domain. Positions 75-97 (ENRPQAAPASTLVQVETVQQPAE) are disordered. The segment covering 85-97 (TLVQVETVQQPAE) has biased composition (polar residues).

Belongs to the Hfq family. Homohexamer.

In terms of biological role, RNA chaperone that binds small regulatory RNA (sRNAs) and mRNAs to facilitate mRNA translational regulation in response to envelope stress, environmental stress and changes in metabolite concentrations. Also binds with high specificity to tRNAs. The polypeptide is RNA-binding protein Hfq (Neisseria meningitidis serogroup C / serotype 2a (strain ATCC 700532 / DSM 15464 / FAM18)).